The chain runs to 582 residues: 2-succinyl-5-enolpyruvyl-6-hydroxy-3-cyclohexene-1-carboxylate synthase (582 aa).

Belongs to the TPP enzyme family. MenD subfamily. In terms of assembly, homodimer. Mg(2+) serves as cofactor. Requires Mn(2+) as cofactor. Thiamine diphosphate is required as a cofactor.

The enzyme catalyses isochorismate + 2-oxoglutarate + H(+) = 5-enolpyruvoyl-6-hydroxy-2-succinyl-cyclohex-3-ene-1-carboxylate + CO2. It participates in quinol/quinone metabolism; 1,4-dihydroxy-2-naphthoate biosynthesis; 1,4-dihydroxy-2-naphthoate from chorismate: step 2/7. The protein operates within cofactor biosynthesis; phylloquinone biosynthesis. Functionally, catalyzes the thiamine diphosphate-dependent decarboxylation of 2-oxoglutarate and the subsequent addition of the resulting succinic semialdehyde-thiamine pyrophosphate anion to isochorismate to yield 2-succinyl-5-enolpyruvyl-6-hydroxy-3-cyclohexene-1-carboxylate (SEPHCHC). This Trichodesmium erythraeum (strain IMS101) protein is 2-succinyl-5-enolpyruvyl-6-hydroxy-3-cyclohexene-1-carboxylate synthase.